A 99-amino-acid polypeptide reads, in one-letter code: Large ribosomal subunit protein uL23 (99 aa).

It belongs to the universal ribosomal protein uL23 family. In terms of assembly, part of the 50S ribosomal subunit. Contacts protein L29, and trigger factor when it is bound to the ribosome.

Its function is as follows. One of the early assembly proteins it binds 23S rRNA. One of the proteins that surrounds the polypeptide exit tunnel on the outside of the ribosome. Forms the main docking site for trigger factor binding to the ribosome. This is Large ribosomal subunit protein uL23 from Ectopseudomonas mendocina (strain ymp) (Pseudomonas mendocina).